Here is a 122-residue protein sequence, read N- to C-terminus: Small ribosomal subunit protein uS13 (122 aa).

The disordered stretch occupies residues 93 to 122 (RLSLPVRGQRTKTNSRTRKGKRKTVAGKKK). Basic residues predominate over residues 101–122 (QRTKTNSRTRKGKRKTVAGKKK).

The protein belongs to the universal ribosomal protein uS13 family. In terms of assembly, part of the 30S ribosomal subunit. Forms a loose heterodimer with protein S19. Forms two bridges to the 50S subunit in the 70S ribosome.

In terms of biological role, located at the top of the head of the 30S subunit, it contacts several helices of the 16S rRNA. In the 70S ribosome it contacts the 23S rRNA (bridge B1a) and protein L5 of the 50S subunit (bridge B1b), connecting the 2 subunits; these bridges are implicated in subunit movement. Contacts the tRNAs in the A and P-sites. The polypeptide is Small ribosomal subunit protein uS13 (Chlamydia caviae (strain ATCC VR-813 / DSM 19441 / 03DC25 / GPIC) (Chlamydophila caviae)).